Consider the following 534-residue polypeptide: NEDD8-activating enzyme E1 regulatory subunit (534 aa).

A2 carries the N-acetylalanine modification. N6-acetyllysine occurs at positions 6 and 341. Positions 331–344 are interaction with UBA3; sequence DMIADSGKYIKLQN.

Belongs to the ubiquitin-activating E1 family. ULA1 subfamily. Heterodimer of UBA3 and NAE1. The complex binds NEDD8 and UBE2M. Binds APP and TP53BP2. Post-translationally, ubiquitinated by TRIP12, leading to its degradation by the proteasome. In terms of tissue distribution, ubiquitous in fetal tissues. Expressed throughout the adult brain.

The protein localises to the cell membrane. Its pathway is protein modification; protein neddylation. Its activity is regulated as follows. Binding of TP53BP2 to the regulatory subunit NAE1 decreases neddylation activity. Its function is as follows. Regulatory subunit of the dimeric UBA3-NAE1 E1 enzyme. E1 activates NEDD8 by first adenylating its C-terminal glycine residue with ATP, thereafter linking this residue to the side chain of the catalytic cysteine, yielding a NEDD8-UBA3 thioester and free AMP. E1 finally transfers NEDD8 to the catalytic cysteine of UBE2M. Necessary for cell cycle progression through the S-M checkpoint. Overexpression of NAE1 causes apoptosis through deregulation of NEDD8 conjugation. The covalent attachment of NEDD8 to target proteins is known as 'neddylation' and the process is involved in the regulation of cell growth, viability and development. In Homo sapiens (Human), this protein is NEDD8-activating enzyme E1 regulatory subunit (NAE1).